We begin with the raw amino-acid sequence, 301 residues long: Troponin T, cardiac muscle (301 aa).

The span at 1–72 (MSDAEEVVEE…EAKDAEEGPV (72 aa)) shows a compositional bias: acidic residues. 2 disordered regions span residues 1–97 (MSDA…DGER) and 125–224 (NRKK…KKKI). Position 2 is an N-acetylserine (Ser2). Phosphoserine; by CK2 is present on Ser2. 2 stretches are compositionally biased toward basic and acidic residues: residues 125-186 (NRKK…DEAR) and 206-224 (QTER…KKKI). Thr207 bears the Phosphothreonine; by PKC/PRKCA mark. Ser211 carries the phosphoserine; by PKC/PRKCA modification. Thr216 is modified (phosphothreonine; by PKC/PRKCA and RAF1). The residue at position 297 (Thr297) is a Phosphothreonine; by PKC/PRKCA.

It belongs to the troponin T family. Post-translationally, phosphorylation at Thr-216 by PRKCA induces significant reduction in myofilament calcium sensitivity and actomyosin ATPase activity.

Functionally, troponin T is the tropomyosin-binding subunit of troponin, the thin filament regulatory complex which confers calcium-sensitivity to striated muscle actomyosin ATPase activity. The protein is Troponin T, cardiac muscle (Tnnt2) of Mus musculus (Mouse).